Reading from the N-terminus, the 152-residue chain is UPF0266 membrane protein YobD (152 aa).

3 helical membrane passes run 6 to 26 (LVLI…QFIM), 45 to 65 (VDSV…VTSH), and 67 to 87 (AQMT…IFWI).

This sequence belongs to the UPF0266 family.

It is found in the cell inner membrane. In Salmonella agona (strain SL483), this protein is UPF0266 membrane protein YobD.